The chain runs to 254 residues: Probable 2,4-dienoyl-CoA reductase [(2E)-enoyl-CoA-producing] (254 aa).

6–38 (VIITGGSSGMGKAMAKKQAELGWHVMVTGRNHE) serves as a coordination point for NADP(+). Threonine 100 contacts substrate. Tyrosine 142 serves as the catalytic Proton acceptor. Position 157 (lysine 157) interacts with NAD(+).

It belongs to the short-chain dehydrogenases/reductases (SDR) family. 2,4-dienoyl-CoA reductase subfamily.

The enzyme catalyses a 4,5-saturated-(2E)-enoyl-CoA + NADP(+) = a (2E,4E)-dienoyl-CoA + NADPH + H(+). The catalysed reaction is a (2E,4Z)-dienoyl-CoA + NADPH + H(+) = a 4,5-saturated-(2E)-enoyl-CoA + NADP(+). It participates in lipid metabolism; fatty acid beta-oxidation. Functionally, auxiliary enzyme of beta-oxidation. It participates in the metabolism of unsaturated fatty enoyl-CoA esters having double bonds in both even- and odd-numbered positions. Catalyzes the NADP-dependent reduction of 2,4-dienoyl-CoA to yield trans-3-enoyl-CoA. The polypeptide is Probable 2,4-dienoyl-CoA reductase [(2E)-enoyl-CoA-producing] (fadH) (Bacillus subtilis (strain 168)).